A 106-amino-acid polypeptide reads, in one-letter code: Large ribosomal subunit protein eL42 (106 aa).

Residues 26–53 (YKKGKDSLYAQGKRRYDRKQSGYGGQTK) form a disordered region.

It belongs to the eukaryotic ribosomal protein eL42 family. Component of the large ribosomal subunit.

Its subcellular location is the cytoplasm. Functionally, component of the large ribosomal subunit. The ribosome is a large ribonucleoprotein complex responsible for the synthesis of proteins in the cell. The protein is Large ribosomal subunit protein eL42 (rpl36a) of Danio rerio (Zebrafish).